Reading from the N-terminus, the 293-residue chain is NAD kinase (293 aa).

Asp72 functions as the Proton acceptor in the catalytic mechanism. Residues 72–73 (DG), 146–147 (ND), Arg157, Lys174, Asp176, 187–192 (TAYALS), and Gln247 contribute to the NAD(+) site.

The protein belongs to the NAD kinase family. A divalent metal cation is required as a cofactor.

It localises to the cytoplasm. It carries out the reaction NAD(+) + ATP = ADP + NADP(+) + H(+). Its function is as follows. Involved in the regulation of the intracellular balance of NAD and NADP, and is a key enzyme in the biosynthesis of NADP. Catalyzes specifically the phosphorylation on 2'-hydroxyl of the adenosine moiety of NAD to yield NADP. This is NAD kinase from Marinomonas sp. (strain MWYL1).